We begin with the raw amino-acid sequence, 369 residues long: DNA replication and repair protein RecF (369 aa).

Residue 30–37 participates in ATP binding; sequence GENAQGKT.

This sequence belongs to the RecF family.

It is found in the cytoplasm. In terms of biological role, the RecF protein is involved in DNA metabolism; it is required for DNA replication and normal SOS inducibility. RecF binds preferentially to single-stranded, linear DNA. It also seems to bind ATP. The chain is DNA replication and repair protein RecF from Oceanobacillus iheyensis (strain DSM 14371 / CIP 107618 / JCM 11309 / KCTC 3954 / HTE831).